A 154-amino-acid chain; its full sequence is Ubiquitin-conjugating enzyme E2 L5 (154 aa).

The 148-residue stretch at 2–149 folds into the UBC core domain; the sequence is AASRRLMKEL…AEEFTKKYGE (148 aa). The Glycyl thioester intermediate role is filled by cysteine 86.

The protein belongs to the ubiquitin-conjugating enzyme family.

It carries out the reaction S-ubiquitinyl-[E1 ubiquitin-activating enzyme]-L-cysteine + [E2 ubiquitin-conjugating enzyme]-L-cysteine = [E1 ubiquitin-activating enzyme]-L-cysteine + S-ubiquitinyl-[E2 ubiquitin-conjugating enzyme]-L-cysteine.. The protein operates within protein modification; protein ubiquitination. Its function is as follows. Catalyzes the covalent attachment of ubiquitin to other proteins. The protein is Ubiquitin-conjugating enzyme E2 L5 of Homo sapiens (Human).